We begin with the raw amino-acid sequence, 70 residues long: ATP synthase subunit c (70 aa).

Helical transmembrane passes span 4 to 24 and 45 to 65; these read IAAAIAIGLSALGAGIGNGLI and IMFIGIGLVEALPIIGVVIAF.

It belongs to the ATPase C chain family. In terms of assembly, F-type ATPases have 2 components, F(1) - the catalytic core - and F(0) - the membrane proton channel. F(1) has five subunits: alpha(3), beta(3), gamma(1), delta(1), epsilon(1). F(0) has three main subunits: a(1), b(2) and c(10-14). The alpha and beta chains form an alternating ring which encloses part of the gamma chain. F(1) is attached to F(0) by a central stalk formed by the gamma and epsilon chains, while a peripheral stalk is formed by the delta and b chains.

It is found in the cell membrane. Functionally, f(1)F(0) ATP synthase produces ATP from ADP in the presence of a proton or sodium gradient. F-type ATPases consist of two structural domains, F(1) containing the extramembraneous catalytic core and F(0) containing the membrane proton channel, linked together by a central stalk and a peripheral stalk. During catalysis, ATP synthesis in the catalytic domain of F(1) is coupled via a rotary mechanism of the central stalk subunits to proton translocation. Its function is as follows. Key component of the F(0) channel; it plays a direct role in translocation across the membrane. A homomeric c-ring of between 10-14 subunits forms the central stalk rotor element with the F(1) delta and epsilon subunits. This chain is ATP synthase subunit c, found in Staphylococcus haemolyticus (strain JCSC1435).